The chain runs to 227 residues: Cytochrome c oxidase subunit 2 (227 aa).

Residues 1-14 lie on the Mitochondrial intermembrane side of the membrane; it reads MAYPLQLGLQDATS. A helical transmembrane segment spans residues 15–45; it reads PIMEELMNFHDHTLMIVFLISSLVLYIISLM. Topologically, residues 46–59 are mitochondrial matrix; the sequence is LTTKLTHTSTMDAQ. A helical transmembrane segment spans residues 60-87; sequence EVETIWTILPAAILVLIALPSLRILYMM. Residues 88–227 lie on the Mitochondrial intermembrane side of the membrane; sequence DEINNPVLTV…YFENWSASMI (140 aa). Cu cation-binding residues include histidine 161, cysteine 196, glutamate 198, cysteine 200, histidine 204, and methionine 207. Glutamate 198 provides a ligand contact to Mg(2+). Position 218 is a phosphotyrosine (tyrosine 218).

It belongs to the cytochrome c oxidase subunit 2 family. Component of the cytochrome c oxidase (complex IV, CIV), a multisubunit enzyme composed of 14 subunits. The complex is composed of a catalytic core of 3 subunits MT-CO1, MT-CO2 and MT-CO3, encoded in the mitochondrial DNA, and 11 supernumerary subunits COX4I, COX5A, COX5B, COX6A, COX6B, COX6C, COX7A, COX7B, COX7C, COX8 and NDUFA4, which are encoded in the nuclear genome. The complex exists as a monomer or a dimer and forms supercomplexes (SCs) in the inner mitochondrial membrane with NADH-ubiquinone oxidoreductase (complex I, CI) and ubiquinol-cytochrome c oxidoreductase (cytochrome b-c1 complex, complex III, CIII), resulting in different assemblies (supercomplex SCI(1)III(2)IV(1) and megacomplex MCI(2)III(2)IV(2)). Found in a complex with TMEM177, COA6, COX18, COX20, SCO1 and SCO2. Interacts with TMEM177 in a COX20-dependent manner. Interacts with COX20. Interacts with COX16. It depends on Cu cation as a cofactor.

It is found in the mitochondrion inner membrane. The enzyme catalyses 4 Fe(II)-[cytochrome c] + O2 + 8 H(+)(in) = 4 Fe(III)-[cytochrome c] + 2 H2O + 4 H(+)(out). Its function is as follows. Component of the cytochrome c oxidase, the last enzyme in the mitochondrial electron transport chain which drives oxidative phosphorylation. The respiratory chain contains 3 multisubunit complexes succinate dehydrogenase (complex II, CII), ubiquinol-cytochrome c oxidoreductase (cytochrome b-c1 complex, complex III, CIII) and cytochrome c oxidase (complex IV, CIV), that cooperate to transfer electrons derived from NADH and succinate to molecular oxygen, creating an electrochemical gradient over the inner membrane that drives transmembrane transport and the ATP synthase. Cytochrome c oxidase is the component of the respiratory chain that catalyzes the reduction of oxygen to water. Electrons originating from reduced cytochrome c in the intermembrane space (IMS) are transferred via the dinuclear copper A center (CU(A)) of subunit 2 and heme A of subunit 1 to the active site in subunit 1, a binuclear center (BNC) formed by heme A3 and copper B (CU(B)). The BNC reduces molecular oxygen to 2 water molecules using 4 electrons from cytochrome c in the IMS and 4 protons from the mitochondrial matrix. In Micaelamys namaquensis (Namaqua rock rat), this protein is Cytochrome c oxidase subunit 2 (MT-CO2).